Here is a 237-residue protein sequence, read N- to C-terminus: Phosphoribosylaminoimidazole-succinocarboxamide synthase (237 aa).

This sequence belongs to the SAICAR synthetase family.

The enzyme catalyses 5-amino-1-(5-phospho-D-ribosyl)imidazole-4-carboxylate + L-aspartate + ATP = (2S)-2-[5-amino-1-(5-phospho-beta-D-ribosyl)imidazole-4-carboxamido]succinate + ADP + phosphate + 2 H(+). Its pathway is purine metabolism; IMP biosynthesis via de novo pathway; 5-amino-1-(5-phospho-D-ribosyl)imidazole-4-carboxamide from 5-amino-1-(5-phospho-D-ribosyl)imidazole-4-carboxylate: step 1/2. This Enterococcus faecalis (strain ATCC 700802 / V583) protein is Phosphoribosylaminoimidazole-succinocarboxamide synthase.